The chain runs to 264 residues: Indole-3-glycerol phosphate synthase (264 aa).

The protein belongs to the TrpC family.

It catalyses the reaction 1-(2-carboxyphenylamino)-1-deoxy-D-ribulose 5-phosphate + H(+) = (1S,2R)-1-C-(indol-3-yl)glycerol 3-phosphate + CO2 + H2O. The protein operates within amino-acid biosynthesis; L-tryptophan biosynthesis; L-tryptophan from chorismate: step 4/5. This is Indole-3-glycerol phosphate synthase from Lactococcus lactis subsp. cremoris (strain MG1363).